A 1724-amino-acid polypeptide reads, in one-letter code: Protein CHROMATIN REMODELING 5 (1724 aa).

Disordered stretches follow at residues 24-88 (QNAA…QSST) and 104-415 (DCQP…DDIE). The segment covering 25–34 (NAATFQSSPL) has biased composition (polar residues). A compositionally biased stretch (basic and acidic residues) spans 126 to 144 (EAYHSEDNHSNDRSEKLDS). Positions 138–164 (RSEKLDSENENDNENEEEDNEMNKHQS) form a coiled coil. Composition is skewed to acidic residues over residues 145–157 (ENEN…EEDN), 170–186 (PADE…DEDN), 239–264 (ADMD…DAAD), and 278–297 (VSDE…YEDD). Over residues 301–313 (KKPKVRQQSKGFR) the composition is skewed to basic residues. The short motif at 320-327 (ERKSFHVS) is the Nuclear localization signal 1 element. The segment covering 337–350 (QDDDSEEDSENDND) has biased composition (acidic residues). Over residues 362–376 (TLRQNNGRSTNTIGQ) the composition is skewed to polar residues. The segment covering 403 to 412 (DGKNRKNQKD) has biased composition (basic and acidic residues). Positions 420-499 (DVIEKVLWHQ…FKKVLNYTKK (80 aa)) constitute a Chromo 1 domain. Positions 505–525 (RYRTALSREEIEVNDVSKEMD) form a coiled coil. Residues 533–597 (SQVERIIADR…REVSIAVQGK (65 aa)) enclose the Chromo 2 domain. The region spanning 637–809 (VNSWLNDTNV…WALLHFLDPG (173 aa)) is the Helicase ATP-binding domain. ATP is bound at residue 650–657 (DEMGLGKT). The DEAH box motif lies at 760-763 (DEAH). In terms of domain architecture, Helicase C-terminal spans 943 to 1094 (ILDKLLVRLR…HLVIQKLNAE (152 aa)). Positions 1126–1163 (KEDKNDEESKKRLLSMDIDEILERAEQVEEKHTDETEH) form a coiled coil. Positions 1199–1245 (ALAPRAARNTKSYVDPSHPDRTSKRKKKGSEPPEHTERSQKRRKTEY) are disordered. 2 consecutive short sequence motifs (nuclear localization signal) follow at residues 1224 to 1231 (KKKGSEPP) and 1348 to 1355 (LKRVQGLQ). The span at 1227–1237 (GSEPPEHTERS) shows a compositional bias: basic and acidic residues. 2 disordered regions span residues 1480–1524 (QFKA…EMSD) and 1654–1724 (KFKT…FPPR). The segment covering 1504–1520 (DGPRKTQKAEPLVKEEG) has biased composition (basic and acidic residues). The segment covering 1658–1667 (AGNSQGSQQV) has biased composition (polar residues). The span at 1669 to 1691 (KGIDTAKFEAWKRRRRTENDVQT) shows a compositional bias: basic and acidic residues. Residues 1692–1702 (ERPTITNSNSL) show a composition bias toward polar residues.

It belongs to the SNF2/RAD54 helicase family.

It localises to the nucleus. Its function is as follows. DNA-binding helicase that specifically binds to the promoter of target genes, leading to chromatin remodeling, possibly by promoting deposition of histone H3.3. Probable chromatin remodeling factor. This chain is Protein CHROMATIN REMODELING 5, found in Arabidopsis thaliana (Mouse-ear cress).